A 216-amino-acid chain; its full sequence is UPF0502 protein Ent638_1581 (216 aa).

The protein belongs to the UPF0502 family.

The polypeptide is UPF0502 protein Ent638_1581 (Enterobacter sp. (strain 638)).